The following is a 231-amino-acid chain: LexA repressor (231 aa).

Residues 26-46 constitute a DNA-binding region (H-T-H motif); it reads FDEMKDALDLRSKSGIHRLIT. Catalysis depends on for autocatalytic cleavage activity residues Ser152 and Lys190.

It belongs to the peptidase S24 family. Homodimer.

It catalyses the reaction Hydrolysis of Ala-|-Gly bond in repressor LexA.. Represses a number of genes involved in the response to DNA damage (SOS response), including recA and lexA. In the presence of single-stranded DNA, RecA interacts with LexA causing an autocatalytic cleavage which disrupts the DNA-binding part of LexA, leading to derepression of the SOS regulon and eventually DNA repair. The sequence is that of LexA repressor from Bradyrhizobium diazoefficiens (strain JCM 10833 / BCRC 13528 / IAM 13628 / NBRC 14792 / USDA 110).